Consider the following 156-residue polypeptide: Small ribosomal subunit protein uS7 (156 aa).

The protein belongs to the universal ribosomal protein uS7 family. In terms of assembly, part of the 30S ribosomal subunit. Contacts proteins S9 and S11.

Functionally, one of the primary rRNA binding proteins, it binds directly to 16S rRNA where it nucleates assembly of the head domain of the 30S subunit. Is located at the subunit interface close to the decoding center, probably blocks exit of the E-site tRNA. The polypeptide is Small ribosomal subunit protein uS7 (Rippkaea orientalis (strain PCC 8801 / RF-1) (Cyanothece sp. (strain PCC 8801))).